We begin with the raw amino-acid sequence, 665 residues long: GTPase IMAP family member 8 (665 aa).

Residues 8-210 (MSELRLLLLG…HVNFKTEGSR (203 aa)) enclose the AIG1-type G 1 domain. The interval 17–24 (GKCRSGKS) is G1. GTP contacts are provided by residues 17–25 (GKCRSGKSA) and S38. The G2 stretch occupies residues 44–48 (TVIKM). A G3 region spans residues 65-68 (DTPD). The G4 stretch occupies residues 134-137 (TRKD). GTP-binding positions include 135–137 (RKD) and N170. Residues 169 to 171 (NNK) are G5. The tract at residues 217–246 (EAASQEGDKPQGPRERQLQSTGPEQNPGTS) is disordered. Basic and acidic residues predominate over residues 222–233 (EGDKPQGPRERQ). The segment covering 234-246 (LQSTGPEQNPGTS) has biased composition (polar residues). AIG1-type G domains are found at residues 245–435 (TSEL…VFRE) and 436–644 (KETL…SKLI). Coiled coils occupy residues 400-427 (NYRA…HQNG) and 608-657 (QAQE…EKLL).

It belongs to the TRAFAC class TrmE-Era-EngA-EngB-Septin-like GTPase superfamily. AIG1/Toc34/Toc159-like paraseptin GTPase family. IAN subfamily. As to expression, expressed in the spleen, intestine, liver, and colon, as well as in lung, placenta, kidney, muscle, and heart. Extremely low expression, if any, in brain, in thymus, bone marrow, and blood leukocytes. Detected in T-cells.

The protein resides in the endoplasmic reticulum. The protein localises to the golgi apparatus. Its subcellular location is the mitochondrion. It is found in the cytoplasm. It localises to the cytosol. Functionally, exerts an anti-apoptotic effect in the immune system and is involved in responses to infections. This is GTPase IMAP family member 8 (GIMAP8) from Homo sapiens (Human).